We begin with the raw amino-acid sequence, 137 residues long: MRKLIYIMVGIAGILGALSRYYLGLTIHEFWHHTFPLATLLINLAGCFLLAWLTTYIAKLNILPSDVITGIGTGFIGSFTTFSTFSVETIQLINHFEWGIAFLYVSCSILGGLIMSGLGYTLGDFLLKKHLTEGDHL.

Transmembrane regions (helical) follow at residues 4 to 24 (LIYIMVGIAGILGALSRYYLG), 37 to 57 (LATLLINLAGCFLLAWLTTYI), 67 to 87 (VITGIGTGFIGSFTTFSTFSV), and 98 to 118 (WGIAFLYVSCSILGGLIMSGL). The Na(+) site is built by Gly-77 and Thr-80.

Belongs to the fluoride channel Fluc/FEX (TC 1.A.43) family.

Its subcellular location is the cell membrane. It catalyses the reaction fluoride(in) = fluoride(out). With respect to regulation, na(+) is not transported, but it plays an essential structural role and its presence is essential for fluoride channel function. In terms of biological role, fluoride-specific ion channel. Important for reducing fluoride concentration in the cell, thus reducing its toxicity. This Bacillus cereus (strain ZK / E33L) protein is Fluoride-specific ion channel FluC 1.